The sequence spans 424 residues: Enolase (424 aa).

Gln163 contacts (2R)-2-phosphoglycerate. Glu205 functions as the Proton donor in the catalytic mechanism. Residues Asp242, Glu285, and Asp312 each coordinate Mg(2+). Residues Lys337, Arg366, Ser367, and Lys388 each contribute to the (2R)-2-phosphoglycerate site. Lys337 functions as the Proton acceptor in the catalytic mechanism.

Belongs to the enolase family. It depends on Mg(2+) as a cofactor.

It localises to the cytoplasm. It is found in the secreted. The protein resides in the cell surface. It catalyses the reaction (2R)-2-phosphoglycerate = phosphoenolpyruvate + H2O. It participates in carbohydrate degradation; glycolysis; pyruvate from D-glyceraldehyde 3-phosphate: step 4/5. In terms of biological role, catalyzes the reversible conversion of 2-phosphoglycerate (2-PG) into phosphoenolpyruvate (PEP). It is essential for the degradation of carbohydrates via glycolysis. The sequence is that of Enolase from Dinoroseobacter shibae (strain DSM 16493 / NCIMB 14021 / DFL 12).